The primary structure comprises 545 residues: Myotubularin-related protein 9 (545 aa).

Methionine 1 is subject to N-acetylmethionine. Residues 4-99 enclose the GRAM domain; the sequence is AELIKTPRVD…LNIASSIEAL (96 aa). Residues 123-498 form the Myotubularin phosphatase domain; the sequence is GWHSFLPEQE…QSLQLWEGIF (376 aa). The stretch at 508–542 forms a coiled coil; that stretch reads LDEAYEEMVNIIEYNKELQAKVNVLRRQLAELETE.

The protein belongs to the protein-tyrosine phosphatase family. Non-receptor class myotubularin subfamily. As to quaternary structure, homodimer. Heterodimer (via C-terminus) with lipid phosphatase MTMR6 (via C-terminus). Heterodimer (via coiled coil domain) with lipid phosphatase MTMR7 (via C-terminus).

It localises to the cytoplasm. It is found in the cell projection. Its subcellular location is the ruffle membrane. The protein resides in the perinuclear region. The protein localises to the endoplasmic reticulum. Acts as an adapter for myotubularin-related phosphatases. Increases lipid phosphatase MTMR6 catalytic activity, specifically towards phosphatidylinositol 3,5-bisphosphate, and MTMR6 binding affinity for phosphorylated phosphatidylinositols. Positively regulates lipid phosphatase MTMR7 catalytic activity. The formation of the MTMR6-MTMR9 complex, stabilizes both MTMR6 and MTMR9 protein levels. Plays a role in the late stages of macropinocytosis possibly by regulating MTMR6-mediated dephosphorylation of phosphatidylinositol 3-phosphate in membrane ruffles. Negatively regulates DNA damage-induced apoptosis, in part via its association with MTMR6. Does not bind mono-, di- and tri-phosphorylated phosphatidylinositols, phosphatidic acid and phosphatidylserine. The chain is Myotubularin-related protein 9 (Mtmr9) from Mus musculus (Mouse).